We begin with the raw amino-acid sequence, 206 residues long: LexA repressor (206 aa).

Positions 28–48 (RAEIATRLGFKSANAAEEHLK) form a DNA-binding region, H-T-H motif. Residues Ser123 and Lys160 each act as for autocatalytic cleavage activity in the active site.

Belongs to the peptidase S24 family. As to quaternary structure, homodimer.

It carries out the reaction Hydrolysis of Ala-|-Gly bond in repressor LexA.. Functionally, represses a number of genes involved in the response to DNA damage (SOS response), including recA and lexA. In the presence of single-stranded DNA, RecA interacts with LexA causing an autocatalytic cleavage which disrupts the DNA-binding part of LexA, leading to derepression of the SOS regulon and eventually DNA repair. The protein is LexA repressor of Shewanella baltica (strain OS223).